The sequence spans 195 residues: GTP cyclohydrolase-2 (195 aa).

Arg-48–Glu-52 serves as a coordination point for GTP. Zn(2+) is bound by residues Cys-53, Cys-64, and Cys-66. Residues Gln-69, Glu-90–Arg-92, and Thr-112 each bind GTP. Residue Asp-124 is the Proton acceptor of the active site. Arg-126 functions as the Nucleophile in the catalytic mechanism. GTP contacts are provided by Thr-147 and Lys-152.

The protein belongs to the GTP cyclohydrolase II family. Zn(2+) serves as cofactor.

The catalysed reaction is GTP + 4 H2O = 2,5-diamino-6-hydroxy-4-(5-phosphoribosylamino)-pyrimidine + formate + 2 phosphate + 3 H(+). The protein operates within cofactor biosynthesis; riboflavin biosynthesis; 5-amino-6-(D-ribitylamino)uracil from GTP: step 1/4. Its function is as follows. Catalyzes the conversion of GTP to 2,5-diamino-6-ribosylamino-4(3H)-pyrimidinone 5'-phosphate (DARP), formate and pyrophosphate. This chain is GTP cyclohydrolase-2, found in Campylobacter fetus subsp. fetus (strain 82-40).